The primary structure comprises 429 residues: MSDNDTNVKQWKVRRLIATLEAARGNGTSMISLVIKPKDEISRISKMLADEYGTASNIKSRVNRLSVLSAITSTQQRLKLYNRTPQNGLVVYCGTLITEDGKEKKVNIDFEPFKPINTSLYLCDNKFHVDALKELLETDDKFGFIIVDGNGALYGVVQGSSREVLLRFNVDLPKKHGRGGQSALRFARLRMEKRHNYLRKVAETATTMFITNDQVNVAALILAGSADFKNELAQSDIFDQRLASKILKIVDVSYGGDNGFNQAIELSSDALQNVKFVQEKKLITKFFDEVAQDTGKYVYGINETLQALEMGAIELLIVWENLETKRMVVKNPSTGEEKVFLNSPTEQHDESKFKDPETGAELDVIEILPLTEWLVNTYQNYGAQLEFVTNKSQEGNQFQKGFGGFGGILRYKVDFQDYAVVEDDLDEFI.

This sequence belongs to the eukaryotic release factor 1 family. In terms of assembly, heterodimer of two subunits, one of which binds GTP.

The protein localises to the cytoplasm. Its function is as follows. Directs the termination of nascent peptide synthesis (translation) in response to the termination codons UAA, UAG and UGA. This Cryptosporidium hominis protein is Eukaryotic peptide chain release factor subunit 1 (erf1).